The following is a 688-amino-acid chain: Polyphosphate kinase (688 aa).

Asn45 contacts ATP. Residues Arg375 and Arg405 each coordinate Mg(2+). The PLD phosphodiesterase domain occupies 430 to 464 (PGLKIHAKLFLISRKENGEVVRYAHIGTGNFNEKT). His435 acts as the Phosphohistidine intermediate in catalysis. Residues Tyr468, Arg564, and His592 each contribute to the ATP site.

This sequence belongs to the polyphosphate kinase 1 (PPK1) family. The cofactor is Mg(2+). Post-translationally, an intermediate of this reaction is the autophosphorylated ppk in which a phosphate is covalently linked to a histidine residue through a N-P bond.

The catalysed reaction is [phosphate](n) + ATP = [phosphate](n+1) + ADP. Functionally, catalyzes the reversible transfer of the terminal phosphate of ATP to form a long-chain polyphosphate (polyP). This chain is Polyphosphate kinase, found in Escherichia coli O157:H7.